A 1383-amino-acid chain; its full sequence is DNA-directed RNA polymerase subunit beta (1383 aa).

It belongs to the RNA polymerase beta chain family. The RNAP catalytic core consists of 2 alpha, 1 beta, 1 beta' and 1 omega subunit. When a sigma factor is associated with the core the holoenzyme is formed, which can initiate transcription.

The enzyme catalyses RNA(n) + a ribonucleoside 5'-triphosphate = RNA(n+1) + diphosphate. Functionally, DNA-dependent RNA polymerase catalyzes the transcription of DNA into RNA using the four ribonucleoside triphosphates as substrates. This is DNA-directed RNA polymerase subunit beta from Bartonella tribocorum (strain CIP 105476 / IBS 506).